The primary structure comprises 130 residues: Large ribosomal subunit protein bL21 (130 aa).

The disordered stretch occupies residues 110-130 (KTAAQPAADEAVAANEVDSEA). Low complexity predominate over residues 112–130 (AAQPAADEAVAANEVDSEA).

It belongs to the bacterial ribosomal protein bL21 family. In terms of assembly, part of the 50S ribosomal subunit. Contacts protein L20.

Its function is as follows. This protein binds to 23S rRNA in the presence of protein L20. The polypeptide is Large ribosomal subunit protein bL21 (Cyanothece sp. (strain PCC 7425 / ATCC 29141)).